Here is a 373-residue protein sequence, read N- to C-terminus: 3-isopropylmalate dehydrogenase (373 aa).

82–93 provides a ligand contact to NAD(+); the sequence is GPKWGTGTVRPE. Substrate-binding residues include Arg100, Arg110, Arg139, and Asp231. Mg(2+) contacts are provided by Asp231, Asp256, and Asp260. Residue 295-306 participates in NAD(+) binding; the sequence is GSAPDLPANKVN.

It belongs to the isocitrate and isopropylmalate dehydrogenases family. In terms of assembly, homodimer. It depends on Mg(2+) as a cofactor. The cofactor is Mn(2+).

The protein localises to the cytoplasm. The enzyme catalyses (2R,3S)-3-isopropylmalate + NAD(+) = 4-methyl-2-oxopentanoate + CO2 + NADH. It functions in the pathway amino-acid biosynthesis; L-leucine biosynthesis; L-leucine from 3-methyl-2-oxobutanoate: step 3/4. Catalyzes the oxidation of 3-carboxy-2-hydroxy-4-methylpentanoate (3-isopropylmalate) to 3-carboxy-4-methyl-2-oxopentanoate. The product decarboxylates to 4-methyl-2 oxopentanoate. The chain is 3-isopropylmalate dehydrogenase (LEU2) from Candida albicans (Yeast).